A 183-amino-acid polypeptide reads, in one-letter code: Large ribosomal subunit protein uL6 (183 aa).

This sequence belongs to the universal ribosomal protein uL6 family. In terms of assembly, part of the 50S ribosomal subunit.

Functionally, this protein binds to the 23S rRNA, and is important in its secondary structure. It is located near the subunit interface in the base of the L7/L12 stalk, and near the tRNA binding site of the peptidyltransferase center. The sequence is that of Large ribosomal subunit protein uL6 from Malacoplasma penetrans (strain HF-2) (Mycoplasma penetrans).